The sequence spans 350 residues: Methionine import ATP-binding protein MetN 1 (350 aa).

Positions 12–251 (IDLKNITVLF…PSREVTQDFV (240 aa)) constitute an ABC transporter domain. An ATP-binding site is contributed by 48 to 55 (GYSGAGKS).

Belongs to the ABC transporter superfamily. Methionine importer (TC 3.A.1.24) family. The complex is composed of two ATP-binding proteins (MetN), two transmembrane proteins (MetI) and a solute-binding protein (MetQ).

Its subcellular location is the cell membrane. The enzyme catalyses L-methionine(out) + ATP + H2O = L-methionine(in) + ADP + phosphate + H(+). It catalyses the reaction D-methionine(out) + ATP + H2O = D-methionine(in) + ADP + phosphate + H(+). In terms of biological role, part of the ABC transporter complex MetNIQ involved in methionine import. Responsible for energy coupling to the transport system. The polypeptide is Methionine import ATP-binding protein MetN 1 (Oenococcus oeni (strain ATCC BAA-331 / PSU-1)).